Reading from the N-terminus, the 242-residue chain is DNA repair protein RecO (242 aa).

The protein belongs to the RecO family.

Its function is as follows. Involved in DNA repair and RecF pathway recombination. The chain is DNA repair protein RecO from Methylococcus capsulatus (strain ATCC 33009 / NCIMB 11132 / Bath).